Consider the following 337-residue polypeptide: Ketol-acid reductoisomerase (NADP(+)) (337 aa).

One can recognise a KARI N-terminal Rossmann domain in the interval 3–183 (VEMFYDADAD…GGARAGVIKT (181 aa)). Residues 26–29 (YGSQ), Lys49, Ser52, Ser54, and 84–87 (DTAQ) contribute to the NADP(+) site. Residue His109 is part of the active site. Residue Gly135 coordinates NADP(+). Residues 184–329 (TFKEETETDL…KKLRDLMSWV (146 aa)) form the KARI C-terminal knotted domain. Mg(2+) contacts are provided by Asp192, Glu196, Glu228, and Glu232. A substrate-binding site is contributed by Ser253.

It belongs to the ketol-acid reductoisomerase family. The cofactor is Mg(2+).

It catalyses the reaction (2R)-2,3-dihydroxy-3-methylbutanoate + NADP(+) = (2S)-2-acetolactate + NADPH + H(+). The catalysed reaction is (2R,3R)-2,3-dihydroxy-3-methylpentanoate + NADP(+) = (S)-2-ethyl-2-hydroxy-3-oxobutanoate + NADPH + H(+). The protein operates within amino-acid biosynthesis; L-isoleucine biosynthesis; L-isoleucine from 2-oxobutanoate: step 2/4. Its pathway is amino-acid biosynthesis; L-valine biosynthesis; L-valine from pyruvate: step 2/4. Its function is as follows. Involved in the biosynthesis of branched-chain amino acids (BCAA). Catalyzes an alkyl-migration followed by a ketol-acid reduction of (S)-2-acetolactate (S2AL) to yield (R)-2,3-dihydroxy-isovalerate. In the isomerase reaction, S2AL is rearranged via a Mg-dependent methyl migration to produce 3-hydroxy-3-methyl-2-ketobutyrate (HMKB). In the reductase reaction, this 2-ketoacid undergoes a metal-dependent reduction by NADPH to yield (R)-2,3-dihydroxy-isovalerate. This chain is Ketol-acid reductoisomerase (NADP(+)), found in Mycolicibacterium vanbaalenii (strain DSM 7251 / JCM 13017 / BCRC 16820 / KCTC 9966 / NRRL B-24157 / PYR-1) (Mycobacterium vanbaalenii).